A 164-amino-acid polypeptide reads, in one-letter code: LWamide neuropeptides (164 aa).

Residues 1 to 6 (RSADAQ) constitute a propeptide that is removed on maturation. The tract at residues 1-92 (RSADAQQHGL…WGRSADAQQP (92 aa)) is disordered. A tryptophan amide mark is found at tryptophan 11 and tryptophan 20. A propeptide spanning residues 23 to 27 (SADAQ) is cleaved from the precursor. Tryptophan amide is present on residues tryptophan 32 and tryptophan 41. Residues 44–49 (SAEPGQ) constitute a propeptide that is removed on maturation. Tryptophan amide is present on residues tryptophan 53 and tryptophan 62. The propeptide occupies 65–70 (SAEPLQ). Residues tryptophan 74 and tryptophan 83 each carry the tryptophan amide modification. A propeptide spanning residues 86 to 90 (SADAQ) is cleaved from the precursor. Tryptophan amide occurs at positions 95, 106, and 115. Positions 118–123 (SADPGQ) are excised as a propeptide. Tryptophan 127 and tryptophan 137 each carry tryptophan amide. The propeptide occupies 140 to 164 (SYEPPQFEDLEDLKKKSAIPKPSEQ).

The protein belongs to the LWamide neuropeptide family.

The protein localises to the secreted. Metamorphosin A may be part of an internal signaling system involved in control of metamorphosis. The chain is LWamide neuropeptides from Actinia equina (Beadlet anemone).